The chain runs to 161 residues: 2-C-methyl-D-erythritol 2,4-cyclodiphosphate synthase (161 aa).

D10 and H12 together coordinate a divalent metal cation. Residues 10–12 (DVH) and 36–37 (HS) each bind 4-CDP-2-C-methyl-D-erythritol 2-phosphate. H44 is an a divalent metal cation binding site. Residues 58–60 (DIG), 63–67 (FSDTD), and R144 contribute to the 4-CDP-2-C-methyl-D-erythritol 2-phosphate site.

Belongs to the IspF family. In terms of assembly, homotrimer. A divalent metal cation is required as a cofactor.

It carries out the reaction 4-CDP-2-C-methyl-D-erythritol 2-phosphate = 2-C-methyl-D-erythritol 2,4-cyclic diphosphate + CMP. Its pathway is isoprenoid biosynthesis; isopentenyl diphosphate biosynthesis via DXP pathway; isopentenyl diphosphate from 1-deoxy-D-xylulose 5-phosphate: step 4/6. Its function is as follows. Involved in the biosynthesis of isopentenyl diphosphate (IPP) and dimethylallyl diphosphate (DMAPP), two major building blocks of isoprenoid compounds. Catalyzes the conversion of 4-diphosphocytidyl-2-C-methyl-D-erythritol 2-phosphate (CDP-ME2P) to 2-C-methyl-D-erythritol 2,4-cyclodiphosphate (ME-CPP) with a corresponding release of cytidine 5-monophosphate (CMP). This Burkholderia ambifaria (strain MC40-6) protein is 2-C-methyl-D-erythritol 2,4-cyclodiphosphate synthase.